We begin with the raw amino-acid sequence, 518 residues long: Beta-TrCP (518 aa).

The span at 1-12 (MEGFSCSLQPPT) shows a compositional bias: polar residues. Positions 1-24 (MEGFSCSLQPPTASEREDCNRDEP) are disordered. The span at 14 to 24 (SEREDCNRDEP) shows a compositional bias: basic and acidic residues. The region spanning 119–157 (DHIAENILSYLDAKSLCSAELVCKEWYRVTSDGMLWKKL) is the F-box domain. WD repeat units lie at residues 230 to 258 (ETSKGVYCLQYDDQKIVSGLRDNTIKIWD), 270 to 298 (GHTGSVLCLQYDERVIITGSSDSTVRVWD), 310 to 338 (HHCEAVLHLRFNNGMMVTCSKDRSIAVWD), 353 to 381 (GHRAAVNVVDFDDKYIVSASGDRTIKVWN), 393 to 421 (GHKRGIACLQYRDRLVVSGSSDNTIRLWD), 433 to 461 (GHEELVRCIRFDNKRIVSGAYDGKIKVWD), and 482 to 510 (EHSGRVFRLQFDEFQIVSSSHDDTILIWD).

Part of a SCF (SKP1-cullin-F-box) ubiquitin-protein ligase complex. Interacts with fbxo5.

Its function is as follows. Substrate recognition component of a SCF (SKP1-CUL1-F-box protein) E3 ubiquitin-protein ligase complex which mediates the ubiquitination and subsequent proteasomal degradation of target proteins. Probably recognizes and binds to phosphorylated target proteins. May participate in Wnt signaling. The sequence is that of Beta-TrCP (fbxw1) from Xenopus laevis (African clawed frog).